A 542-amino-acid polypeptide reads, in one-letter code: Protein NODULATION SIGNALING PATHWAY 1 (542 aa).

A disordered region spans residues 73-150 (TSTTSLEPCG…SNCNSGNSKE (78 aa)). Over residues 92–103 (LPKKRNATDESS) the composition is skewed to basic and acidic residues. Residues 136–148 (AKANGSNCNSGNS) are compositionally biased toward low complexity. A GRAS domain is found at 145–532 (SGNSKEGRWA…QPVSFCSLWK (388 aa)). Residues 152 to 214 (RWAEQLLNPC…HLSSSSSSPT (63 aa)) are leucine repeat I (LRI). Residues 233 to 332 (LLKFYEVSPW…GYNYYPRLLG (100 aa)) are VHIID. Residues 269–273 (LHILD) carry the VHIID motif. Residues 333–357 (YAQSININLQINRIENHSLQTLNAQ) are leucine repeat II (LRII). The tract at residues 367–452 (LIVCAQFRLH…RESDERRVME (86 aa)) is PFYRE. Residues 455-532 (AAKALTNQRE…QPVSFCSLWK (78 aa)) form an SAW region.

The protein belongs to the GRAS family. Highly expressed in roots.

The protein resides in the nucleus. Its function is as follows. Transcriptional regulator essential for Nod-factor-induced gene expression. Acts downstream of calcium spiking and a calcium/calmodulin-dependent protein kinase required for activation of early nodulation gene expression. Acts as a common symbiosis gene that positively contributes to the early steps of the arbuscular mycorrhizal fungus and rhizobial infection processes in roots. Transcription factor involved in the positive regulation of the beta-carotene isomerase D27, which participates in a pathway leading to biosynthesis of strigolactones in roots. The polypeptide is Protein NODULATION SIGNALING PATHWAY 1 (Lotus japonicus (Lotus corniculatus var. japonicus)).